Consider the following 352-residue polypeptide: Probable RNA methyltransferase Mpe_A3613 (352 aa).

Glutamate 88 functions as the Proton acceptor in the catalytic mechanism. The region spanning 91 to 317 (LLPRDGLCVS…TKLRRSAGQD (227 aa)) is the Radical SAM core domain. Residues cysteine 98 and cysteine 322 are joined by a disulfide bond. Residues cysteine 105, cysteine 109, and cysteine 112 each contribute to the [4Fe-4S] cluster site. S-adenosyl-L-methionine-binding positions include 150-151 (GE), serine 180, 203-205 (SLH), and asparagine 279. Cysteine 322 (S-methylcysteine intermediate) is an active-site residue.

This sequence belongs to the radical SAM superfamily. RlmN family. The cofactor is [4Fe-4S] cluster.

The protein resides in the cytoplasm. The sequence is that of Probable RNA methyltransferase Mpe_A3613 from Methylibium petroleiphilum (strain ATCC BAA-1232 / LMG 22953 / PM1).